The chain runs to 1342 residues: DNA-directed RNA polymerase subunit beta (1342 aa).

N6-acetyllysine occurs at positions 1022 and 1200.

It belongs to the RNA polymerase beta chain family. The RNAP catalytic core consists of 2 alpha, 1 beta, 1 beta' and 1 omega subunit. When a sigma factor is associated with the core the holoenzyme is formed, which can initiate transcription.

It carries out the reaction RNA(n) + a ribonucleoside 5'-triphosphate = RNA(n+1) + diphosphate. DNA-dependent RNA polymerase catalyzes the transcription of DNA into RNA using the four ribonucleoside triphosphates as substrates. The polypeptide is DNA-directed RNA polymerase subunit beta (Escherichia coli O139:H28 (strain E24377A / ETEC)).